Consider the following 316-residue polypeptide: BTB/POZ domain-containing adapter for CUL3-mediated RhoA degradation protein 2 (316 aa).

The region spanning 28-96 is the BTB domain; sequence KYVQLNVGGS…LRDDTITLPQ (69 aa). The segment covering 268-279 has biased composition (polar residues); it reads EATSRSRSQASP. A disordered region spans residues 268 to 288; that stretch reads EATSRSRSQASPSEDEDTFEL. The residue at position 278 (Ser-278) is a Phosphoserine. At Ser-280 the chain carries Phosphoserine; by CK2.

It belongs to the BACURD family. As to quaternary structure, component of the BCR(TNFAIP1) E3 ubiquitin ligase complex, at least composed of CUL3, TNFAIP1/BACURD2 and RBX1. Interacts with RHOA; with a preference for RhoA-GDP. Interacts with RHOB. Interacts with PCNA. Interacts with CSNK2B. In terms of processing, phosphorylation at Ser-280 by CK2 facilitates the nucleus localization and increases interaction with PCNA.

It is found in the cytoplasm. The protein localises to the nucleus. Its subcellular location is the endosome. The protein operates within protein modification; protein ubiquitination. Its function is as follows. Substrate-specific adapter of a BCR (BTB-CUL3-RBX1) E3 ubiquitin-protein ligase complex involved in regulation of cytoskeleton structure. The BCR(TNFAIP1) E3 ubiquitin ligase complex mediates the ubiquitination of RHOA, leading to its degradation by the proteasome, thereby regulating the actin cytoskeleton and cell migration. Its interaction with RHOB may regulate apoptosis. May enhance the PCNA-dependent DNA polymerase delta activity. This Mus musculus (Mouse) protein is BTB/POZ domain-containing adapter for CUL3-mediated RhoA degradation protein 2 (Tnfaip1).